The primary structure comprises 1066 residues: Vinculin (1066 aa).

The tract at residues 1–835 (MPVFHTRTIE…GAVAKVREAF (835 aa)) is N-terminal globular head. Ser-97 bears the Phosphoserine mark. Positions 168-208 (MTKMAKMIDERQQELTHQEHRVMLVNSMNTVKELLPVLISA) are talin-interaction. Lys-173 carries the N6-acetyllysine modification. A run of 3 repeats spans residues 259-369 (ASKD…KVEN), 370-479 (AARK…KTNR), and 480-589 (AVAN…QMQE). Residues 259-589 (ASKDTEAMKR…LKDLKTQMQE (331 aa)) form a 3 X 112 AA tandem repeats region. A phosphoserine mark is found at Ser-260, Ser-272, Ser-275, Ser-290, Ser-346, and Ser-434. Lys-496 carries the N6-acetyllysine modification. Tyr-537 carries the phosphotyrosine modification. Phosphoserine is present on residues Ser-574, Ser-579, and Ser-600. A phosphothreonine mark is found at Thr-604 and Thr-672. Position 721 is a phosphoserine (Ser-721). Residues 741–764 (MANIQPQMLVAGATSIARRANRIL) are interaction with ACTN4. Phosphoserine is present on residues Ser-795 and Ser-809. Tyr-822 bears the Phosphotyrosine mark. A linker (Pro-rich) region spans residues 836–878 (QPQEPDFPPPPPDLEQLRLTDELAPPKPPLPEGEVPPPRPPPP). Positions 857–887 (ELAPPKPPLPEGEVPPPRPPPPEEKDEEFPE) are disordered. Over residues 860–876 (PPKPPLPEGEVPPPRPP) the composition is skewed to pro residues. The segment at 879 to 1066 (EEKDEEFPEQ…RWVRKTPWYQ (188 aa)) is C-terminal tail. Facilitates phospholipid membrane insertion stretches follow at residues 935-978 (RLVR…KRIR) and 1052-1066 (AGFT…PWYQ). The residue at position 1065 (Tyr-1065) is a Phosphotyrosine; by SRC-type Tyr-kinases.

Belongs to the vinculin/alpha-catenin family. As to quaternary structure, exhibits self-association properties. Part of a complex composed of THSD1, PTK2/FAK1, TLN1 and VCL. Interacts with APBB1IP, NRAP and TLN1. Interacts with CTNNB1 and this interaction is necessary for its localization to the cell-cell junctions and for its function in regulating cell surface expression of E-cadherin. Interacts with SORBS1. Interacts with SYNM. Interacts with CTNNA1. Binds to ACTN4; this interaction triggers conformational changes. Interacts with FLII. Phosphorylated; on serines, threonines and tyrosines. Phosphorylation on Tyr-1065 in activated platelets affects head-tail interactions and cell spreading but has no effect on actin binding nor on localization to focal adhesion plaques. In terms of processing, acetylated; mainly by myristic acid but also by a small amount of palmitic acid.

The protein localises to the cell membrane. It localises to the cell junction. The protein resides in the adherens junction. It is found in the focal adhesion. Its subcellular location is the cytoplasm. The protein localises to the cytoskeleton. It localises to the sarcolemma. The protein resides in the cell projection. It is found in the podosome. Functionally, actin filament (F-actin)-binding protein involved in cell-matrix adhesion and cell-cell adhesion. Regulates cell-surface E-cadherin expression and potentiates mechanosensing by the E-cadherin complex. May also play important roles in cell morphology and locomotion. This is Vinculin from Rattus norvegicus (Rat).